The sequence spans 415 residues: Peptide chain release factor subunit 1 (415 aa).

This sequence belongs to the eukaryotic release factor 1 family. In terms of assembly, heterodimer of two subunits, one of which binds GTP.

It localises to the cytoplasm. Directs the termination of nascent peptide synthesis (translation) in response to the termination codons UAA, UAG and UGA. This Thermococcus sibiricus (strain DSM 12597 / MM 739) protein is Peptide chain release factor subunit 1.